The following is a 126-amino-acid chain: Holo-[acyl-carrier-protein] synthase (126 aa).

Asp9 and Glu59 together coordinate Mg(2+).

The protein belongs to the P-Pant transferase superfamily. AcpS family. Mg(2+) serves as cofactor.

The protein resides in the cytoplasm. The enzyme catalyses apo-[ACP] + CoA = holo-[ACP] + adenosine 3',5'-bisphosphate + H(+). Functionally, transfers the 4'-phosphopantetheine moiety from coenzyme A to a Ser of acyl-carrier-protein. The protein is Holo-[acyl-carrier-protein] synthase of Myxococcus xanthus (strain DK1622).